The sequence spans 279 residues: MIDSKTKLIGLIGHPVEHSFSPIMHNAAIKDLGINYTYLAFDVSEENLKYIVSGAKALQIAGFNVTIPHKINIMKYLDEIDEDAKSIGAVNTVKIENGKTIGYNTDGIGVKRALEEKSGILINKNILIIGSGGASRAVSFELAKENNLTIVNRNIEKAKILSEELSTKLKKENSIKYGALNIDIKNFDIIINTTPVGMYPDTDVNPVIPLNDIKKSAVVMDLIYNPLEPVFLKEAMKYGVETINGLGMLVYQGAVSFQIWTGKKPDVYVMKKAINSKIR.

Residues 19 to 21 (SFS) and T66 each bind shikimate. K70 functions as the Proton acceptor in the catalytic mechanism. NADP(+) is bound at residue E82. 2 residues coordinate shikimate: N91 and D106. Residues 130–134 (GSGGA) and L222 each bind NADP(+). Y224 is a shikimate binding site. G245 is a binding site for NADP(+).

This sequence belongs to the shikimate dehydrogenase family. Homodimer.

The catalysed reaction is shikimate + NADP(+) = 3-dehydroshikimate + NADPH + H(+). It participates in metabolic intermediate biosynthesis; chorismate biosynthesis; chorismate from D-erythrose 4-phosphate and phosphoenolpyruvate: step 4/7. Involved in the biosynthesis of the chorismate, which leads to the biosynthesis of aromatic amino acids. Catalyzes the reversible NADPH linked reduction of 3-dehydroshikimate (DHSA) to yield shikimate (SA). This chain is Shikimate dehydrogenase (NADP(+)), found in Methanococcus maripaludis (strain C6 / ATCC BAA-1332).